A 73-amino-acid polypeptide reads, in one-letter code: Small ribosomal subunit protein bS18 (73 aa).

The protein belongs to the bacterial ribosomal protein bS18 family. In terms of assembly, part of the 30S ribosomal subunit. Forms a tight heterodimer with protein bS6.

Functionally, binds as a heterodimer with protein bS6 to the central domain of the 16S rRNA, where it helps stabilize the platform of the 30S subunit. This Coxiella burnetii (strain Dugway 5J108-111) protein is Small ribosomal subunit protein bS18.